Here is a 213-residue protein sequence, read N- to C-terminus: Glycerol-3-phosphate acyltransferase (213 aa).

Helical transmembrane passes span 2 to 22, 52 to 74, 81 to 100, 112 to 132, 143 to 163, and 164 to 184; these read ITIV…GLWI, AGMA…PIIF, PLIF…FAGF, VIFG…FGAL, VTAS…GFIL, and SNYD…IIIR.

It belongs to the PlsY family. As to quaternary structure, probably interacts with PlsX.

Its subcellular location is the cell membrane. It carries out the reaction an acyl phosphate + sn-glycerol 3-phosphate = a 1-acyl-sn-glycero-3-phosphate + phosphate. It participates in lipid metabolism; phospholipid metabolism. In terms of biological role, catalyzes the transfer of an acyl group from acyl-phosphate (acyl-PO(4)) to glycerol-3-phosphate (G3P) to form lysophosphatidic acid (LPA). This enzyme utilizes acyl-phosphate as fatty acyl donor, but not acyl-CoA or acyl-ACP. This chain is Glycerol-3-phosphate acyltransferase, found in Streptococcus pneumoniae (strain CGSP14).